A 440-amino-acid polypeptide reads, in one-letter code: Ribosomal protein uS12 methylthiotransferase RimO (440 aa).

The MTTase N-terminal domain occupies 1 to 117 (MKIFFISLGC…ITEVIDKVLG (117 aa)). [4Fe-4S] cluster contacts are provided by Cys10, Cys46, Cys80, Cys154, Cys158, and Cys161. The 231-residue stretch at 140–370 (TTGGYYSFLK…MEIQQGIAFE (231 aa)) folds into the Radical SAM core domain. One can recognise a TRAM domain in the interval 373-440 (ESMVGRKLKV…KEYDLIGTAE (68 aa)).

This sequence belongs to the methylthiotransferase family. RimO subfamily. [4Fe-4S] cluster is required as a cofactor.

It is found in the cytoplasm. The catalysed reaction is L-aspartate(89)-[ribosomal protein uS12]-hydrogen + (sulfur carrier)-SH + AH2 + 2 S-adenosyl-L-methionine = 3-methylsulfanyl-L-aspartate(89)-[ribosomal protein uS12]-hydrogen + (sulfur carrier)-H + 5'-deoxyadenosine + L-methionine + A + S-adenosyl-L-homocysteine + 2 H(+). Functionally, catalyzes the methylthiolation of an aspartic acid residue of ribosomal protein uS12. This chain is Ribosomal protein uS12 methylthiotransferase RimO, found in Lachnoclostridium phytofermentans (strain ATCC 700394 / DSM 18823 / ISDg) (Clostridium phytofermentans).